The following is a 421-amino-acid chain: Probable sugar-binding periplasmic protein (421 aa).

The N-terminal stretch at 1–27 (MHKLLKLAAMGTAACALLAGMAPVANA) is a signal peptide.

This sequence belongs to the bacterial solute-binding protein 1 family.

It is found in the periplasm. Part of a binding-protein-dependent transport system for a sugar. The protein is Probable sugar-binding periplasmic protein of Brucella melitensis biotype 1 (strain ATCC 23456 / CCUG 17765 / NCTC 10094 / 16M).